Reading from the N-terminus, the 541-residue chain is Protopine 6-monooxygenase (541 aa).

Residues 9 to 29 traverse the membrane as a helical segment; the sequence is LLLNTWISAYSMAALLALVLV. C476 is a heme binding site.

The protein belongs to the cytochrome P450 family. It depends on heme as a cofactor.

Its subcellular location is the endoplasmic reticulum membrane. The catalysed reaction is protopine + reduced [NADPH--hemoprotein reductase] + O2 = 6-hydroxyprotopine + oxidized [NADPH--hemoprotein reductase] + H2O + H(+). It functions in the pathway alkaloid biosynthesis. Its function is as follows. Catalyzes the conversion of protopine and allocryptopine to dihydrosanguinarine and dihydrochelerythrine, respectively, in the biosynthesis of isoquinoline alkaloid sanguinarine. The sequence is that of Protopine 6-monooxygenase (CYP82N3) from Papaver somniferum (Opium poppy).